Consider the following 169-residue polypeptide: Transcription antitermination protein NusB (169 aa).

The segment at 150–169 (AAATSRRTETAGGESNDAGS) is disordered.

It belongs to the NusB family.

In terms of biological role, involved in transcription antitermination. Required for transcription of ribosomal RNA (rRNA) genes. Binds specifically to the boxA antiterminator sequence of the ribosomal RNA (rrn) operons. This Rhodococcus jostii (strain RHA1) protein is Transcription antitermination protein NusB.